A 199-amino-acid chain; its full sequence is Pyridoxal 5'-phosphate synthase subunit PdxT (199 aa).

L-glutamine is bound at residue 49 to 51 (GES). Cys-81 acts as the Nucleophile in catalysis. L-glutamine contacts are provided by residues Arg-110 and 139–140 (IR). Active-site charge relay system residues include His-175 and Glu-177.

The protein belongs to the glutaminase PdxT/SNO family. In the presence of PdxS, forms a dodecamer of heterodimers. Only shows activity in the heterodimer.

The catalysed reaction is aldehydo-D-ribose 5-phosphate + D-glyceraldehyde 3-phosphate + L-glutamine = pyridoxal 5'-phosphate + L-glutamate + phosphate + 3 H2O + H(+). It catalyses the reaction L-glutamine + H2O = L-glutamate + NH4(+). The protein operates within cofactor biosynthesis; pyridoxal 5'-phosphate biosynthesis. Functionally, catalyzes the hydrolysis of glutamine to glutamate and ammonia as part of the biosynthesis of pyridoxal 5'-phosphate. The resulting ammonia molecule is channeled to the active site of PdxS. The sequence is that of Pyridoxal 5'-phosphate synthase subunit PdxT from Frankia casuarinae (strain DSM 45818 / CECT 9043 / HFP020203 / CcI3).